A 227-amino-acid polypeptide reads, in one-letter code: Small ribosomal subunit protein uS3 (227 aa).

The KH type-2 domain maps to 24-94; the sequence is LDEYLEEELG…RVSIEVKELP (71 aa). A disordered region spans residues 207-227; it reads EEVEDELKELIGKSEDEAEGA.

Belongs to the universal ribosomal protein uS3 family. As to quaternary structure, part of the 30S ribosomal subunit.

Its function is as follows. Binds the lower part of the 30S subunit head. This Methanopyrus kandleri (strain AV19 / DSM 6324 / JCM 9639 / NBRC 100938) protein is Small ribosomal subunit protein uS3.